A 266-amino-acid chain; its full sequence is 2-C-methyl-D-erythritol 4-phosphate cytidylyltransferase (266 aa).

The interval 229–266 (NRDCGPGTRDPESAHPQSSVSASAFSGPGSRAPGPEEI) is disordered. Residues 243-252 (HPQSSVSASA) are compositionally biased toward polar residues.

Belongs to the IspD/TarI cytidylyltransferase family. IspD subfamily.

The enzyme catalyses 2-C-methyl-D-erythritol 4-phosphate + CTP + H(+) = 4-CDP-2-C-methyl-D-erythritol + diphosphate. It functions in the pathway isoprenoid biosynthesis; isopentenyl diphosphate biosynthesis via DXP pathway; isopentenyl diphosphate from 1-deoxy-D-xylulose 5-phosphate: step 2/6. Catalyzes the formation of 4-diphosphocytidyl-2-C-methyl-D-erythritol from CTP and 2-C-methyl-D-erythritol 4-phosphate (MEP). The protein is 2-C-methyl-D-erythritol 4-phosphate cytidylyltransferase of Xanthomonas axonopodis pv. citri (strain 306).